A 458-amino-acid polypeptide reads, in one-letter code: Mitochondrial-processing peptidase subunit beta (458 aa).

The N-terminal 41 residues, 1 to 41 (MYRRLASGLYQTSQRRIAQVQPKSVFVPETIVTTLPNGFRV), are a transit peptide targeting the mitochondrion. Position 73 (His73) interacts with Zn(2+). Glu76 serves as the catalytic Proton acceptor. Zn(2+)-binding residues include His77 and Glu153.

The protein belongs to the peptidase M16 family. As to quaternary structure, heterodimer of mppa-1 (alpha) and mppb-1 (beta) subunits, forming the mitochondrial processing protease (MPP) in which mppa-1 is involved in substrate recognition and binding and mppb-1 is the catalytic subunit. It depends on Zn(2+) as a cofactor.

It localises to the mitochondrion matrix. The catalysed reaction is Release of N-terminal transit peptides from precursor proteins imported into the mitochondrion, typically with Arg in position P2.. With respect to regulation, binding to mppa-1 is required for catalytic activity. Inhibited by metal chelator ethylenediaminetetraacetic acid (EDTA). Its function is as follows. Catalytic subunit of the essential mitochondrial processing protease (MPP), which cleaves the mitochondrial sequence off newly imported precursors proteins. Preferentially, cleaves after an arginine at position P2. This Caenorhabditis elegans protein is Mitochondrial-processing peptidase subunit beta.